Here is a 390-residue protein sequence, read N- to C-terminus: Argininosuccinate synthase (390 aa).

Residue 6–14 (AYSGGLDTT) participates in ATP binding. Tyrosine 84 contacts L-citrulline. Residue glycine 114 participates in ATP binding. Positions 116, 120, and 121 each coordinate L-aspartate. Asparagine 120 is an L-citrulline binding site. Arginine 124, serine 171, serine 180, glutamate 253, and tyrosine 265 together coordinate L-citrulline.

Belongs to the argininosuccinate synthase family. Type 1 subfamily. In terms of assembly, homotetramer.

The protein localises to the cytoplasm. It carries out the reaction L-citrulline + L-aspartate + ATP = 2-(N(omega)-L-arginino)succinate + AMP + diphosphate + H(+). It functions in the pathway amino-acid biosynthesis; L-arginine biosynthesis; L-arginine from L-ornithine and carbamoyl phosphate: step 2/3. This chain is Argininosuccinate synthase, found in Sulfurisphaera tokodaii (strain DSM 16993 / JCM 10545 / NBRC 100140 / 7) (Sulfolobus tokodaii).